Consider the following 695-residue polypeptide: Polyribonucleotide nucleotidyltransferase (695 aa).

2 residues coordinate Mg(2+): aspartate 488 and aspartate 494. One can recognise a KH domain in the interval 554–613; sequence PKTAVIKIQTDKIRDLIGKGGETIKGIISTSSASVDVDDNGNVNIFSNDQKSFDTAMQMV. The 68-residue stretch at 623–690 folds into the S1 motif domain; the sequence is GKVYTGKVVK…DRGRIKLSRK (68 aa).

Belongs to the polyribonucleotide nucleotidyltransferase family. As to quaternary structure, component of the RNA degradosome, which is a multiprotein complex involved in RNA processing and mRNA degradation. The cofactor is Mg(2+).

The protein localises to the cytoplasm. It catalyses the reaction RNA(n+1) + phosphate = RNA(n) + a ribonucleoside 5'-diphosphate. Involved in mRNA degradation. Catalyzes the phosphorolysis of single-stranded polyribonucleotides processively in the 3'- to 5'-direction. The chain is Polyribonucleotide nucleotidyltransferase from Ruthia magnifica subsp. Calyptogena magnifica.